Here is a 184-residue protein sequence, read N- to C-terminus: Large ribosomal subunit protein uL18 (184 aa).

This sequence belongs to the universal ribosomal protein uL18 family. As to quaternary structure, part of the 50S ribosomal subunit. Contacts the 5S and 23S rRNAs.

Its function is as follows. This is one of the proteins that bind and probably mediate the attachment of the 5S RNA into the large ribosomal subunit, where it forms part of the central protuberance. This is Large ribosomal subunit protein uL18 from Natronomonas pharaonis (strain ATCC 35678 / DSM 2160 / CIP 103997 / JCM 8858 / NBRC 14720 / NCIMB 2260 / Gabara) (Halobacterium pharaonis).